The sequence spans 425 residues: MQITVVGAGIVGISTAYALAQEGHQVTLVERNPGPGEGTSYANGGQLSYSYVAPLAGPGVLSHVPGWLLRRDSPLRLKPSLDPVLLRWGLRFIAACNRERADRTTRELLALSFYSRARMEALRAASPDLSFSFARRGKLVVYRDAAAFASARAQVGYQATLGCEQHALSADETIAREPALAGARGAIVGAIYTPDEDVADCHQLCVGLFNRLCALPNVALRFNAGAESLWVEGRRVRGVRTAHEPITADAVVVAAGVASAGLLGPLRIDPGLYPLKGYSISLPLGEGGAGSDGAPVVSVTDAARKIVYARIGRTLRVAGMADLVGWSDRLDPRRVQTLYDETRALFPAALRASDAGADAAPWAGMRPATPTGVPVVGPSPVDGLWLNVGHGALGFTLAMGSAGLLADLIARRAPAIAAAPYALAR.

3–17 (ITVVGAGIVGISTAY) lines the FAD pocket.

Belongs to the DadA oxidoreductase family. It depends on FAD as a cofactor.

The catalysed reaction is a D-alpha-amino acid + A + H2O = a 2-oxocarboxylate + AH2 + NH4(+). In terms of biological role, oxidative deamination of D-amino acids. The polypeptide is D-amino acid dehydrogenase 2 (dadA2) (Ralstonia nicotianae (strain ATCC BAA-1114 / GMI1000) (Ralstonia solanacearum)).